The sequence spans 472 residues: Methanethiol oxidase (472 aa).

It belongs to the selenium-binding protein family.

Its subcellular location is the nucleus. The protein localises to the cytoplasm. The protein resides in the cytosol. It is found in the membrane. It carries out the reaction methanethiol + O2 + H2O = hydrogen sulfide + formaldehyde + H2O2 + H(+). The protein operates within organosulfur degradation. Its function is as follows. Catalyzes the oxidation of methanethiol, an organosulfur compound known to be produced in substantial amounts by gut bacteria. Selenium-binding protein which may be involved in the sensing of reactive xenobiotics in the cytoplasm. May be involved in intra-Golgi protein transport. The sequence is that of Methanethiol oxidase (selenbp1-a) from Xenopus laevis (African clawed frog).